We begin with the raw amino-acid sequence, 76 residues long: UPF0729 protein C18orf32 (76 aa).

The tract at residues 1–37 (MVCIPCIVIPVLLWIYKKFLEPYIYPLVSPFVSRIWP) is necessary for its localzation to the endoplasmic reticulum and lipid droplets. Positions 46-76 (DTNKGKVNFKGADMNGLPTKGPTEICDKKKD) are disordered.

It belongs to the UPF0729 family. In terms of assembly, interacts with DERL1 and AMFR. In terms of processing, undergoes ER-associated degradation (ERAD).

It is found in the endoplasmic reticulum. The protein localises to the lipid droplet. May activate the NF-kappa-B signaling pathway. This is UPF0729 protein C18orf32 (C18orf32) from Homo sapiens (Human).